Consider the following 281-residue polypeptide: Ribosomal RNA small subunit methyltransferase A (281 aa).

The S-adenosyl-L-methionine site is built by Asn35, Leu37, Gly62, Glu83, Asp107, and Asn125.

It belongs to the class I-like SAM-binding methyltransferase superfamily. rRNA adenine N(6)-methyltransferase family. RsmA subfamily.

It is found in the cytoplasm. The catalysed reaction is adenosine(1518)/adenosine(1519) in 16S rRNA + 4 S-adenosyl-L-methionine = N(6)-dimethyladenosine(1518)/N(6)-dimethyladenosine(1519) in 16S rRNA + 4 S-adenosyl-L-homocysteine + 4 H(+). Its function is as follows. Specifically dimethylates two adjacent adenosines (A1518 and A1519) in the loop of a conserved hairpin near the 3'-end of 16S rRNA in the 30S particle. May play a critical role in biogenesis of 30S subunits. The chain is Ribosomal RNA small subunit methyltransferase A from Deinococcus geothermalis (strain DSM 11300 / CIP 105573 / AG-3a).